Reading from the N-terminus, the 704-residue chain is Mannan-binding lectin serine protease 1 (704 aa).

The first 24 residues, 1 to 24 (MRFLSFWRLLLYHALCLALPEVSA), serve as a signal peptide directing secretion. Positions 25–143 (HTVELNEMFG…TGFDAHYMAV (119 aa)) constitute a CUB 1 domain. Positions 25-189 (HTVELNEMFG…HTDNRTCRVE (165 aa)) are homodimerization. Residues 25–189 (HTVELNEMFG…HTDNRTCRVE (165 aa)) form an interaction with MBL2 region. The interaction with FCN2 stretch occupies residues 25-283 (HTVELNEMFG…STQTHSVQIL (259 aa)). An interaction with MBL1 region spans residues 25–305 (HTVELNEMFG…RLSYRAAGNE (281 aa)). Residue N54 is glycosylated (N-linked (GlcNAc...) asparagine). Ca(2+) contacts are provided by E73, D81, D126, S128, D144, V145, and E147. C78 and C96 are oxidised to a cystine. The region spanning 144-187 (DVDECKEREDEELSCDHYCHNYIGGYYCSCRFGYILHTDNRTCR) is the EGF-like; calcium-binding domain. 4 disulfides stabilise this stretch: C148-C162, C158-C171, C173-C186, and C190-C217. Ca(2+)-binding residues include N164, Y165, and G168. The residue at position 164 (N164) is a (3R)-3-hydroxyasparagine. N183 carries an N-linked (GlcNAc...) asparagine glycan. A CUB 2 domain is found at 190–302 (CSGNLFTQRT…RGWRLSYRAA (113 aa)). Ca(2+) is bound by residues E240, D250, D287, and S289. C247 and C265 are oxidised to a cystine. 2 Sushi domains span residues 304-369 (NECP…TCKI) and 370-439 (VDCG…TCLP). 8 cysteine pairs are disulfide-bonded: C306–C354, C334–C367, C372–C419, C402–C437, C441–C577, C480–C496, C619–C636, and C647–C677. Residues N390 and N412 are each glycosylated (N-linked (GlcNAc...) asparagine). The Peptidase S1 domain maps to 454–701 (IFNGRPAQKG…NKDWIQRITG (248 aa)). Residues H495 and D557 each act as charge relay system in the active site. S651 acts as the Charge relay system in catalysis.

This sequence belongs to the peptidase S1 family. In terms of assembly, homodimer. Interacts with the oligomeric lectins MBL2, FCN2 and FCN3; triggers the lectin pathway of complement through activation of C3. Interacts with SERPING1. Interacts with COLEC11; probably triggers the lectin pathway of complement. In terms of processing, the iron and 2-oxoglutarate dependent 3-hydroxylation of aspartate and asparagine is (R) stereospecific within EGF domains. N-glycosylated. Some N-linked glycan are of the complex-type. Post-translationally, autoproteolytic processing of the proenzyme produces the active enzyme composed on the heavy and the light chain held together by a disulfide bond. Isoform 1 but not isoform 2 is activated through autoproteolytic processing. In terms of tissue distribution, protein of the plasma which is primarily expressed by liver.

It is found in the secreted. Its activity is regulated as follows. Inhibited by SERPING1 and A2M. Functions in the lectin pathway of complement, which performs a key role in innate immunity by recognizing pathogens through patterns of sugar moieties and neutralizing them. The lectin pathway is triggered upon binding of mannan-binding lectin (MBL) and ficolins to sugar moieties which leads to activation of the associated proteases MASP1 and MASP2. Functions as an endopeptidase and may activate MASP2 or C2 or directly activate C3 the key component of complement reaction. Isoform 2 may have an inhibitory effect on the activation of the lectin pathway of complement or may cleave IGFBP5. Also plays a role in development. This Mus musculus (Mouse) protein is Mannan-binding lectin serine protease 1 (Masp1).